Here is a 1400-residue protein sequence, read N- to C-terminus: DNA-directed RNA polymerase subunit beta' (1400 aa).

Cys-70, Cys-72, Cys-85, and Cys-88 together coordinate Zn(2+). Mg(2+) is bound by residues Asp-460, Asp-462, and Asp-464. 4 residues coordinate Zn(2+): Cys-814, Cys-888, Cys-895, and Cys-898.

Belongs to the RNA polymerase beta' chain family. As to quaternary structure, the RNAP catalytic core consists of 2 alpha, 1 beta, 1 beta' and 1 omega subunit. When a sigma factor is associated with the core the holoenzyme is formed, which can initiate transcription. Requires Mg(2+) as cofactor. The cofactor is Zn(2+).

The catalysed reaction is RNA(n) + a ribonucleoside 5'-triphosphate = RNA(n+1) + diphosphate. DNA-dependent RNA polymerase catalyzes the transcription of DNA into RNA using the four ribonucleoside triphosphates as substrates. The polypeptide is DNA-directed RNA polymerase subunit beta' (Methylococcus capsulatus (strain ATCC 33009 / NCIMB 11132 / Bath)).